The following is a 180-amino-acid chain: F17 fimbrial protein (180 aa).

The N-terminal stretch at 1–21 (MQKIQFILGILAAASSSATLA) is a signal peptide. Cysteines 37 and 77 form a disulfide.

Belongs to the fimbrial protein family.

It is found in the fimbrium. In terms of biological role, fimbriae (also called pili), polar filaments radiating from the surface of the bacterium to a length of 0.5-1.5 micrometers and numbering 100-300 per cell, enable bacteria to colonize the epithelium of specific host organs. The protein is F17 fimbrial protein (F17a-A) of Escherichia coli.